The sequence spans 893 residues: Serine/threonine-protein kinase PLK4 (893 aa).

The 254-residue stretch at 12 to 265 folds into the Protein kinase domain; that stretch reads FRVGNLLGKG…LSSVLDHPFM (254 aa). ATP contacts are provided by residues 18–26 and lysine 41; that span reads LGKGSFAGV. An N6-acetyllysine mark is found at lysine 45 and lysine 46. The active-site Proton acceptor is the aspartate 136. Positions 349 to 358 are enriched in polar residues; the sequence is NQEQETSNSG. Residues 349–393 form a disordered region; the sequence is NQEQETSNSGRGRVIQEAEERPHSRYLRRAHSSDRSETSHGQSRV. Residues 362–371 are compositionally biased toward basic and acidic residues; it reads VIQEAEERPH. 2 positions are modified to phosphoserine: serine 403 and serine 588. The Cryptic POLO box 1 (CPB1) domain maps to 509–622; sequence TLRSITSPLT…SRFVQLVRSK (114 aa). A Cryptic POLO box 2 (CPB2) domain is found at 623 to 736; the sequence is SPKITYFTRY…GRRPSSTSSP (114 aa). Residues 730–749 are disordered; sequence PSSTSSPKALTPPPPVDPNY. In terms of domain architecture, POLO box spans 809-887; that stretch reads QLLKSVFVKN…LSSILLMFSN (79 aa).

Belongs to the protein kinase superfamily. Ser/Thr protein kinase family. CDC5/Polo subfamily. Homodimer. Interacts with CEP152 (via N-terminus). Interacts with CEP78; this interaction may be important for proper PLK4 localization to the centriole and PLK4-induced overduplication of centrioles. Interacts with CEP131. Interacts simultaneously with TENT5C and CEP192. Interacts with TENT5C; this interaction leads to the TENT5C recruitment in the centrosome. Interacts with CEP85; this interaction may be important in cell migration and centriole assembly. Post-translationally, ubiquitinated; leading to its degradation by the proteasome. Tyrosine-phosphorylated by TEC. In terms of processing, acetylation by KAT2A and KAT2B impairs kinase activity by shifting the kinase to an inactive conformation.

It is found in the cytoplasm. The protein localises to the cytoskeleton. Its subcellular location is the microtubule organizing center. The protein resides in the centrosome. It localises to the centriole. It is found in the nucleus. The protein localises to the nucleolus. Its subcellular location is the cleavage furrow. It carries out the reaction L-seryl-[protein] + ATP = O-phospho-L-seryl-[protein] + ADP + H(+). The enzyme catalyses L-threonyl-[protein] + ATP = O-phospho-L-threonyl-[protein] + ADP + H(+). In terms of biological role, serine/threonine-protein kinase that plays a central role in centriole duplication. Able to trigger procentriole formation on the surface of the parental centriole cylinder, leading to the recruitment of centriole biogenesis proteins such as SASS6, CPAP, CCP110, CEP135 and gamma-tubulin. When overexpressed, it is able to induce centrosome amplification through the simultaneous generation of multiple procentrioles adjoining each parental centriole during S phase. Phosphorylates 'Ser-151' of FBXW5 during the G1/S transition, leading to inhibit FBXW5 ability to ubiquitinate SASS6. Its central role in centriole replication suggests a possible role in tumorigenesis, centrosome aberrations being frequently observed in tumors. Also involved in deuterosome-mediated centriole amplification in multiciliated that can generate more than 100 centrioles. Also involved in trophoblast differentiation by phosphorylating HAND1, leading to disrupt the interaction between HAND1 and MDFIC and activate HAND1. Phosphorylates CDC25C and CHEK2. Required for the recruitment of STIL to the centriole and for STIL-mediated centriole amplification. Phosphorylates CEP131 and PCM1 which is essential for proper organization and integrity of centriolar satellites. The chain is Serine/threonine-protein kinase PLK4 from Bos taurus (Bovine).